The following is a 192-amino-acid chain: MKIKTVEFARSAFNEEQYPKDNLPQIVIVGRSNVGKSTLINTVLNRKNLAKTSSRPGKTRGINFYLINNKFYLVDLPGYGYAKVSKEMKKQWAHNIETFLNTSQNLRHGLFLIDIRRNPTEDDFLMINWFKHKNLPFTVVLTKADKVNKSESRKAVEDICKIFKINREEVIIFSALEKMGVSQVLSIFEKYA.

One can recognise an EngB-type G domain in the interval 22 to 192; that stretch reads NLPQIVIVGR…QVLSIFEKYA (171 aa). GTP is bound by residues 30 to 37, 57 to 61, 75 to 78, 142 to 145, and 173 to 175; these read GRSNVGKS, GKTRG, DLPG, TKAD, and FSA. S37 and T59 together coordinate Mg(2+).

This sequence belongs to the TRAFAC class TrmE-Era-EngA-EngB-Septin-like GTPase superfamily. EngB GTPase family. Requires Mg(2+) as cofactor.

Its function is as follows. Necessary for normal cell division and for the maintenance of normal septation. The chain is Probable GTP-binding protein EngB from Thermoanaerobacter pseudethanolicus (strain ATCC 33223 / 39E) (Clostridium thermohydrosulfuricum).